The primary structure comprises 190 residues: MESLKQKILSEGIVLSDQVLKVDAFLNHQIDPALMQQIGHEFAQRFAGQGITKIVTIEASGIAPAVMAGLELGIPVIFARKFQSLTLKDDLLISKVFSFTKQTESTIAISARHLTAADKVLVIDDFLANGHAAKALIDLIQQAGAQVAGIGIVIEKSFQEGRNLLESEGYRVESLARVAALENGQVRFLD.

Leucine 20 and asparagine 27 together coordinate xanthine. Residue 128–132 (ANGHA) coordinates 5-phospho-alpha-D-ribose 1-diphosphate. Position 156 (lysine 156) interacts with xanthine.

It belongs to the purine/pyrimidine phosphoribosyltransferase family. Xpt subfamily. As to quaternary structure, homodimer.

The protein resides in the cytoplasm. It carries out the reaction XMP + diphosphate = xanthine + 5-phospho-alpha-D-ribose 1-diphosphate. It functions in the pathway purine metabolism; XMP biosynthesis via salvage pathway; XMP from xanthine: step 1/1. Functionally, converts the preformed base xanthine, a product of nucleic acid breakdown, to xanthosine 5'-monophosphate (XMP), so it can be reused for RNA or DNA synthesis. In Ectopseudomonas mendocina (strain ymp) (Pseudomonas mendocina), this protein is Xanthine phosphoribosyltransferase.